A 217-amino-acid polypeptide reads, in one-letter code: Monomethylamine corrinoid protein 2 (217 aa).

Residues 1-91 (MTNTEIFDKL…ELEKNKKEGD (91 aa)) enclose the B12-binding N-terminal domain. One can recognise a B12-binding domain in the interval 93–217 (AGLAITFVAE…AAKVALEVMK (125 aa)). His-106 contributes to the methylcob(III)alamin binding site.

It belongs to the methylamine corrinoid protein family. In terms of assembly, can form a complex with MtmB.

It functions in the pathway one-carbon metabolism; methanogenesis from methylamine. Functionally, acts as a methyl group carrier between MtmB and MtbA. The chain is Monomethylamine corrinoid protein 2 (mtmC2) from Methanosarcina barkeri.